We begin with the raw amino-acid sequence, 98 residues long: Small ribosomal subunit protein eS24 (98 aa).

The protein belongs to the eukaryotic ribosomal protein eS24 family.

The chain is Small ribosomal subunit protein eS24 (rps2e) from Thermoplasma acidophilum (strain ATCC 25905 / DSM 1728 / JCM 9062 / NBRC 15155 / AMRC-C165).